A 563-amino-acid chain; its full sequence is Arylsulfatase K (563 aa).

The first 17 residues, 1-17, serve as a signal peptide directing secretion; it reads MLLLLVSVIVALALVAP. Positions 40 and 80 each coordinate Ca(2+). The Nucleophile role is filled by Cys-80. The residue at position 80 (Cys-80) is a 3-oxoalanine (Cys). The N-linked (GlcNAc...) asparagine glycan is linked to Asn-108. Residue Lys-128 participates in substrate binding. Asn-191 carries an N-linked (GlcNAc...) asparagine glycan. His-249 contacts substrate. Residue Asn-260 is glycosylated (N-linked (GlcNAc...) asparagine). Asp-311 and His-312 together coordinate Ca(2+). Asn-373, Asn-411, and Asn-496 each carry an N-linked (GlcNAc...) asparagine glycan.

The protein belongs to the sulfatase family. Requires Ca(2+) as cofactor. Post-translationally, the conversion to 3-oxoalanine (also known as C-formylglycine, FGly), of a serine or cysteine residue in prokaryotes and of a cysteine residue in eukaryotes, is critical for catalytic activity. The 75-kDa precursor undergoes proteolytic processing to yield a 23 kDa form. In terms of processing, N-glycosylated with both high mannose and complex type sugars.

The protein localises to the secreted. It is found in the lysosome. The enzyme catalyses an aryl sulfate + H2O = a phenol + sulfate + H(+). It carries out the reaction Hydrolysis of the 2-sulfate groups of the 2-O-sulfo-D-glucuronate residues of chondroitin sulfate, heparin and heparitin sulfate.. Functionally, catalyzes the hydrolysis of pseudosubstrates such as p-nitrocatechol sulfate and p-nitrophenyl sulfate. Catalyzes the hydrolysis of the 2-sulfate groups of the 2-O-sulfo-D-glucuronate residues of chondroitin sulfate, heparin and heparitin sulfate. Acts selectively on 2-sulfoglucuronate and lacks activity against 2-sulfoiduronate. The sequence is that of Arylsulfatase K (Arsk) from Rattus norvegicus (Rat).